The sequence spans 177 residues: Small ribosomal subunit protein uS4 (177 aa).

An S4 RNA-binding domain is found at 104–166 (RRLQTIVYKK…PTSPFKQHPP (63 aa)). The interval 158–177 (TSPFKQHPPTQQGEENVQQA) is disordered. A compositionally biased stretch (polar residues) spans 165–177 (PPTQQGEENVQQA).

Belongs to the universal ribosomal protein uS4 family. Part of the 30S ribosomal subunit. Contacts protein S5. The interaction surface between S4 and S5 is involved in control of translational fidelity.

In terms of biological role, one of the primary rRNA binding proteins, it binds directly to 16S rRNA where it nucleates assembly of the body of the 30S subunit. Functionally, with S5 and S12 plays an important role in translational accuracy. The chain is Small ribosomal subunit protein uS4 from Sulfurisphaera tokodaii (strain DSM 16993 / JCM 10545 / NBRC 100140 / 7) (Sulfolobus tokodaii).